The chain runs to 161 residues: RNA pyrophosphohydrolase (161 aa).

A Nudix hydrolase domain is found at 12 to 154; sequence PYRIGVGMVI…KRKLYKAVIN (143 aa). The short motif at 46–67 is the Nudix box element; that stretch reads GGIILGETYSKAVLREMKEEIG.

The protein belongs to the Nudix hydrolase family. RppH subfamily. The cofactor is a divalent metal cation.

Its function is as follows. Accelerates the degradation of transcripts by removing pyrophosphate from the 5'-end of triphosphorylated RNA, leading to a more labile monophosphorylated state that can stimulate subsequent ribonuclease cleavage. The protein is RNA pyrophosphohydrolase of Orientia tsutsugamushi (strain Boryong) (Rickettsia tsutsugamushi).